The sequence spans 99 residues: Plastocyanin (99 aa).

A Plastocyanin-like domain is found at 1 to 99; sequence VEILLGGEDG…AGMVGKVTVN (99 aa). Cu cation is bound by residues H37, C84, H87, and M92.

The protein belongs to the plastocyanin family. Cu(2+) serves as cofactor.

It localises to the plastid. It is found in the chloroplast thylakoid membrane. Functionally, participates in electron transfer between P700 and the cytochrome b6-f complex in photosystem I. This is Plastocyanin (PETE) from Sambucus nigra (European elder).